A 582-amino-acid chain; its full sequence is uncharacterized protein (582 aa).

The next 6 membrane-spanning stretches (helical) occupy residues 17–37 (VAMLMMLQLVSTLASLYLPTV), 57–77 (LGAVMLGVTGLQVLCAIGAVY), 131–151 (MTATVLVTAPIMCVGGIIMAI), 156–176 (ALTWLLLVSVPILAVANYWII), 239–259 (ALMLPVTTLTINASSVALIWF), and 271–291 (VGSLIAFLSYFAQILMAVLMA). In terms of domain architecture, ABC transmembrane type-1 spans 17–300 (VAMLMMLQLV…ATMTLAVLPR (284 aa)). Residues 335–571 (VRLAGATFTY…CPTYAEFAAS (237 aa)) form the ABC transporter domain. ATP is bound at residue 369–376 (GSTGSGKS).

Belongs to the ABC transporter superfamily. MsbA family.

It is found in the cell membrane. This is an uncharacterized protein from Mycobacterium bovis (strain ATCC BAA-935 / AF2122/97).